The sequence spans 92 residues: Progonadoliberin-1 (92 aa).

An N-terminal signal peptide occupies residues 1–23; sequence MKPIQKLLAGLILLTWCVEGCSS. Glutamine 24 is subject to Pyrrolidone carboxylic acid. The residue at position 33 (glycine 33) is a Glycine amide.

Belongs to the GnRH family. The precursor is cleaved by ACE, which removes the Gly-Lys-Arg peptide at the C-terminus, leading to mature hormone. The mature form of Gonadoliberin-1 is also cleaved and degraded by ACE.

Its subcellular location is the secreted. In terms of biological role, stimulates the secretion of gonadotropins; it stimulates the secretion of both luteinizing and follicle-stimulating hormones. In Homo sapiens (Human), this protein is Progonadoliberin-1 (GNRH1).